The primary structure comprises 749 residues: Protein O-mannosyl-transferase 2 (749 aa).

A disordered region spans residues 1 to 30; that stretch reads MAASVVKTPKCPRRGSAKEQQSKASPKSNN. A helical membrane pass occupies residues 34 to 54; that stretch reads NWHWWILLASVFLITFATRFY. 3 N-linked (GlcNAc...) asparagine glycosylation sites follow: N78, N104, and N117. A run of 5 helical transmembrane segments spans residues 126 to 146, 173 to 193, 204 to 224, 226 to 246, and 266 to 286; these read YFCTTLGALIMPMGFDTVYDL, ILLDPILLFFMMGSVWGMVKI, SVRWWFWLFLTGTMLSCTISV, FVGLFVVLLVGLHTATELWLI, and IALILWPILLYTLFFYIHLSV. N-linked (GlcNAc...) asparagine glycosylation is found at N288 and N312. 3 MIR domains span residues 316 to 372, 382 to 438, and 443 to 499; these read PRDV…IKPH, LQLL…VLIV, and NETV…VEDN. A glycan (N-linked (GlcNAc...) asparagine) is linked at N443. A run of 4 helical transmembrane segments spans residues 572–592, 645–665, 669–689, and 703–723; these read IWWSNLVFLALFVAVFLGNAI, LGAAAWLFVGWLLHYLPFWAM, LYFHHYFPALIFNSLLTGVMF, and VLLGGLLSLIVYSFALFSPLA. N-linked (GlcNAc...) asparagine glycosylation is present at N735.

This sequence belongs to the glycosyltransferase 39 family. In terms of assembly, interacts with Rt/POMT1.

The protein localises to the endoplasmic reticulum membrane. It catalyses the reaction a di-trans,poly-cis-dolichyl beta-D-mannosyl phosphate + L-seryl-[protein] = 3-O-(alpha-D-mannosyl)-L-seryl-[protein] + a di-trans,poly-cis-dolichyl phosphate + H(+). The enzyme catalyses a di-trans,poly-cis-dolichyl beta-D-mannosyl phosphate + L-threonyl-[protein] = 3-O-(alpha-D-mannosyl)-L-threonyl-[protein] + a di-trans,poly-cis-dolichyl phosphate + H(+). It participates in protein modification; protein glycosylation. Functionally, rt/POMT1 and tw/POMT2 function as a protein O-mannosyltransferase in association with each other to generate and maintain normal muscle development. The polypeptide is Protein O-mannosyl-transferase 2 (Drosophila pseudoobscura pseudoobscura (Fruit fly)).